The sequence spans 336 residues: Phosphoribosylformylglycinamidine cyclo-ligase (336 aa).

It belongs to the AIR synthase family.

It is found in the cytoplasm. It carries out the reaction 2-formamido-N(1)-(5-O-phospho-beta-D-ribosyl)acetamidine + ATP = 5-amino-1-(5-phospho-beta-D-ribosyl)imidazole + ADP + phosphate + H(+). It participates in purine metabolism; IMP biosynthesis via de novo pathway; 5-amino-1-(5-phospho-D-ribosyl)imidazole from N(2)-formyl-N(1)-(5-phospho-D-ribosyl)glycinamide: step 2/2. This chain is Phosphoribosylformylglycinamidine cyclo-ligase, found in Caldanaerobacter subterraneus subsp. tengcongensis (strain DSM 15242 / JCM 11007 / NBRC 100824 / MB4) (Thermoanaerobacter tengcongensis).